Reading from the N-terminus, the 776-residue chain is MADRSAIQLIDEEKEFHQSALQYFQQCIGNRDVGLDYHVISVFGSQSSGKSTLLNVLFNTNFDTMDAQVKRQQTTKGIWLAHTKQVNTTIEIDNDRPDIFVLDVEGSDGSERGEDQDFERKAALFAIAVSEVLIVNMWEQQIGLYQGNNMALLKTVFEVNLSLFGKNDNDHKVLLLFVIRDHVGVTPLSSLSDSVTRELEKIWTELSKPAGCEGSSLYDYFDLKFVGLAHKLLQEDKFTQDVKKLGDSFVMKGTENYYFKPQYHHRLPLDGWTMYAENCWDQIERNKDLDLPTQQILVARFKTEEISNEALEEFISKYDESIAPLKGNLGSLTSQLVKLKEECLTKYDEQASRYARNVYMEKREALNTKLNSHISGTINEFLESLMEKLWDDLKLEVSSRDKATTSFVESVAAGKSKIEKEFNESMETFKKLGLLISNEEITCKFSDDIEERIKQLRDAELKAKIGRIKKNLVPELKDHVIHLLSHPSKKVWDDIMNDFESTIKDNISAYQVEKDKYDFKIGLSESENAKIYKNIRILAWRTLDTTVHDYLKIDTIVSILRDRFEDVFRYDAEGSPRLWKTEEEIDGAFRVAKEHALEVFEVLSLAVTSDNVEIIPDVPMAEEESGEDNEIYRDNEGVFHSRRFAHILTELQKENVLDQFRRQINITVLDSKRSIITTRTHIPPWIYVLLAVLGWNEFVAVIRNPLFVTLTLILGATFFVIHKFGLWGPVVNVVQSAVGETRTAIKDKLRQFVVEDHEVKESFEMKDFSKNEQKEK.

The Cytoplasmic segment spans residues 1–681 (MADRSAIQLI…KRSIITTRTH (681 aa)). The region spanning 34-263 (GLDYHVISVF…TENYYFKPQY (230 aa)) is the GB1/RHD3-type G domain. 44–51 (GSQSSGKS) lines the GTP pocket. A helical membrane pass occupies residues 682 to 702 (IPPWIYVLLAVLGWNEFVAVI). Residues 703–705 (RNP) lie on the Lumenal side of the membrane. Residues 706–726 (LFVTLTLILGATFFVIHKFGL) traverse the membrane as a helical segment. Residues 727–776 (WGPVVNVVQSAVGETRTAIKDKLRQFVVEDHEVKESFEMKDFSKNEQKEK) are Cytoplasmic-facing.

This sequence belongs to the TRAFAC class dynamin-like GTPase superfamily. GB1/RHD3 GTPase family. RHD3 subfamily. As to quaternary structure, interacts with RTN1 and YOP1; GTP binding is not required for these interactions.

It localises to the endoplasmic reticulum membrane. In terms of biological role, cooperates with the reticulon proteins RTN1 and RTN2 and the tubule-shaping DP1 family protein YOP1 to generate and maintain the structure of the tubular endoplasmic reticulum network. Has GTPase activity, which is required for its function in ER organization. The chain is Protein SEY1 from Saccharomyces cerevisiae (strain AWRI1631) (Baker's yeast).